A 486-amino-acid chain; its full sequence is ATP synthase subunit beta (486 aa).

Residue 164 to 171 (GGAGVGKT) coordinates ATP.

Belongs to the ATPase alpha/beta chains family. In terms of assembly, F-type ATPases have 2 components, CF(1) - the catalytic core - and CF(0) - the membrane proton channel. CF(1) has five subunits: alpha(3), beta(3), gamma(1), delta(1), epsilon(1). CF(0) has four main subunits: a(1), b(1), b'(1) and c(9-12).

The protein resides in the cellular thylakoid membrane. The catalysed reaction is ATP + H2O + 4 H(+)(in) = ADP + phosphate + 5 H(+)(out). In terms of biological role, produces ATP from ADP in the presence of a proton gradient across the membrane. The catalytic sites are hosted primarily by the beta subunits. The sequence is that of ATP synthase subunit beta from Prochlorococcus marinus (strain MIT 9301).